Here is a 1766-residue protein sequence, read N- to C-terminus: DNA-directed RNA polymerase II subunit RPB1-A (1766 aa).

The Zn(2+) site is built by C69, C72, C79, and H82. Mg(2+)-binding residues include D487, D489, and D491. The tract at residues 813 to 825 is bridging helix; the sequence is PHEFFFHTMAGRE. The segment at 1660-1766 is disordered; sequence HAMSSAAPPS…EFGDEEEEEQ (107 aa). Residues 1706-1716 are compositionally biased toward basic and acidic residues; it reads RGDEPSTHRSD. Residues 1742–1756 are compositionally biased toward low complexity; the sequence is PTAKTPQQAAPPTAA.

It belongs to the RNA polymerase beta' chain family. As to quaternary structure, component of the RNA polymerase II (Pol II) complex consisting of 12 subunits.

The protein resides in the nucleus. The enzyme catalyses RNA(n) + a ribonucleoside 5'-triphosphate = RNA(n+1) + diphosphate. DNA-dependent RNA polymerase catalyzes the transcription of DNA into RNA using the four ribonucleoside triphosphates as substrates. Largest and catalytic component of RNA polymerase II which synthesizes mRNA precursors and many functional non-coding RNAs. Forms the polymerase active center together with the second largest subunit. Pol II is the central component of the basal RNA polymerase II transcription machinery. It is composed of mobile elements that move relative to each other. RPB1 is part of the core element with the central large cleft, the clamp element that moves to open and close the cleft and the jaws that are thought to grab the incoming DNA template. At the start of transcription, a single-stranded DNA template strand of the promoter is positioned within the central active site cleft of Pol II. A bridging helix emanates from RPB1 and crosses the cleft near the catalytic site and is thought to promote translocation of Pol II by acting as a ratchet that moves the RNA-DNA hybrid through the active site by switching from straight to bent conformations at each step of nucleotide addition. During transcription elongation, Pol II moves on the template as the transcript elongates. This Trypanosoma brucei brucei protein is DNA-directed RNA polymerase II subunit RPB1-A (TRP4.8).